We begin with the raw amino-acid sequence, 199 residues long: Shikimate kinase (199 aa).

Residue 14–19 coordinates ATP; it reads GSGKST. Ser18 is a binding site for Mg(2+). 3 residues coordinate substrate: Asp36, Arg60, and Gly82. Position 120 (Arg120) interacts with ATP. Arg147 lines the substrate pocket.

The protein belongs to the shikimate kinase family. As to quaternary structure, monomer. Requires Mg(2+) as cofactor.

Its subcellular location is the cytoplasm. It carries out the reaction shikimate + ATP = 3-phosphoshikimate + ADP + H(+). The protein operates within metabolic intermediate biosynthesis; chorismate biosynthesis; chorismate from D-erythrose 4-phosphate and phosphoenolpyruvate: step 5/7. Catalyzes the specific phosphorylation of the 3-hydroxyl group of shikimic acid using ATP as a cosubstrate. The polypeptide is Shikimate kinase (Chlorobium limicola (strain DSM 245 / NBRC 103803 / 6330)).